The primary structure comprises 61 residues: Small ribosomal subunit protein uS14 (61 aa).

The Zn(2+) site is built by C24, C27, C40, and C43.

It belongs to the universal ribosomal protein uS14 family. Zinc-binding uS14 subfamily. In terms of assembly, part of the 30S ribosomal subunit. Contacts proteins S3 and S10. Requires Zn(2+) as cofactor.

Binds 16S rRNA, required for the assembly of 30S particles and may also be responsible for determining the conformation of the 16S rRNA at the A site. This is Small ribosomal subunit protein uS14 from Coprothermobacter proteolyticus (strain ATCC 35245 / DSM 5265 / OCM 4 / BT).